The sequence spans 244 residues: Zinc import ATP-binding protein ZnuC 2 (244 aa).

Residues 3-218 enclose the ABC transporter domain; that stretch reads IGCASLTIQL…PEYLALFGID (216 aa). 35–42 serves as a coordination point for ATP; sequence GPNGSGKT.

The protein belongs to the ABC transporter superfamily. Zinc importer (TC 3.A.1.15.5) family. As to quaternary structure, the complex is composed of two ATP-binding proteins (ZnuC), two transmembrane proteins (ZnuB) and a solute-binding protein (ZnuA).

It is found in the cell inner membrane. The catalysed reaction is Zn(2+)(out) + ATP(in) + H2O(in) = Zn(2+)(in) + ADP(in) + phosphate(in) + H(+)(in). Part of the ABC transporter complex ZnuABC involved in zinc import. Responsible for energy coupling to the transport system. This Hahella chejuensis (strain KCTC 2396) protein is Zinc import ATP-binding protein ZnuC 2.